The sequence spans 139 residues: uncharacterized protein (139 aa).

This is an uncharacterized protein from Homo sapiens (Human).